The sequence spans 151 residues: D-aminoacyl-tRNA deacylase (151 aa).

The Gly-cisPro motif, important for rejection of L-amino acids motif lies at 137–138 (GP).

This sequence belongs to the DTD family. In terms of assembly, homodimer.

The protein localises to the cytoplasm. It carries out the reaction glycyl-tRNA(Ala) + H2O = tRNA(Ala) + glycine + H(+). The catalysed reaction is a D-aminoacyl-tRNA + H2O = a tRNA + a D-alpha-amino acid + H(+). An aminoacyl-tRNA editing enzyme that deacylates mischarged D-aminoacyl-tRNAs. Also deacylates mischarged glycyl-tRNA(Ala), protecting cells against glycine mischarging by AlaRS. Acts via tRNA-based rather than protein-based catalysis; rejects L-amino acids rather than detecting D-amino acids in the active site. By recycling D-aminoacyl-tRNA to D-amino acids and free tRNA molecules, this enzyme counteracts the toxicity associated with the formation of D-aminoacyl-tRNA entities in vivo and helps enforce protein L-homochirality. The chain is D-aminoacyl-tRNA deacylase from Listeria monocytogenes serotype 4a (strain HCC23).